The sequence spans 121 residues: Large ribosomal subunit protein bL19 (121 aa).

Belongs to the bacterial ribosomal protein bL19 family.

Its function is as follows. This protein is located at the 30S-50S ribosomal subunit interface and may play a role in the structure and function of the aminoacyl-tRNA binding site. The chain is Large ribosomal subunit protein bL19 from Borrelia garinii subsp. bavariensis (strain ATCC BAA-2496 / DSM 23469 / PBi) (Borreliella bavariensis).